The sequence spans 317 residues: MAKNPPENCEDCHILNAEAFKSKKICKSLKICGLVFGILALTLIVLFWGSKHFWPEVPKKAYDMEHTFYSNGEKKKIYMEIDPVTRTEIFRSGNGTDETLEVHDFKNGYTGIYFVGLQKCFIKTQIKVIPEFSEPEEEIDENEEITTTFFEQSVIWVPAEKPIENRDFLKNSKILEICDNVTMYWINPTLISVSELQDFEEEGEDLHFPANEKKGIEQNEQWVVPQVKVEKTRHARQASEEELPINDYTENGIEFDPMLDERGYCCIYCRRGNRYCRRVCEPLLGYYPYPYCYQGGRVICRVIMPCNWWVARMLGRV.

Over 1–30 (MAKNPPENCEDCHILNAEAFKSKKICKSLK) the chain is Cytoplasmic. Residues 31–50 (ICGLVFGILALTLIVLFWGS) form a helical; Signal-anchor for type II membrane protein membrane-spanning segment. The Extracellular portion of the chain corresponds to 51-317 (KHFWPEVPKK…WWVARMLGRV (267 aa)). The region spanning 93 to 186 (GNGTDETLEV…ICDNVTMYWI (94 aa)) is the BRICHOS domain. N94 is a glycosylation site (N-linked (GlcNAc...) asparagine). A disulfide bond links C120 and C178. N-linked (GlcNAc...) asparagine glycosylation occurs at N180. A Phosphoserine modification is found at S239.

It belongs to the chondromodulin-1 family. As to expression, highly expressed in hypovascular connective tissues such as tendons. Also has strong expression in adipose tissue.

It is found in the membrane. The protein resides in the nucleus envelope. The protein localises to the cytoplasm. Its function is as follows. May be an angiogenesis inhibitor. This Homo sapiens (Human) protein is Tenomodulin (TNMD).